The following is a 158-amino-acid chain: 6,7-dimethyl-8-ribityllumazine synthase (158 aa).

5-amino-6-(D-ribitylamino)uracil contacts are provided by residues Phe24, 58–60 (AFE), and 82–84 (AVI). Residue 87–88 (GT) coordinates (2S)-2-hydroxy-3-oxobutyl phosphate. His90 acts as the Proton donor in catalysis. Position 115 (Phe115) interacts with 5-amino-6-(D-ribitylamino)uracil. Position 129 (Arg129) interacts with (2S)-2-hydroxy-3-oxobutyl phosphate.

The protein belongs to the DMRL synthase family. In terms of assembly, forms an icosahedral capsid composed of 60 subunits, arranged as a dodecamer of pentamers.

It carries out the reaction (2S)-2-hydroxy-3-oxobutyl phosphate + 5-amino-6-(D-ribitylamino)uracil = 6,7-dimethyl-8-(1-D-ribityl)lumazine + phosphate + 2 H2O + H(+). Its pathway is cofactor biosynthesis; riboflavin biosynthesis; riboflavin from 2-hydroxy-3-oxobutyl phosphate and 5-amino-6-(D-ribitylamino)uracil: step 1/2. Its function is as follows. Catalyzes the formation of 6,7-dimethyl-8-ribityllumazine by condensation of 5-amino-6-(D-ribitylamino)uracil with 3,4-dihydroxy-2-butanone 4-phosphate. This is the penultimate step in the biosynthesis of riboflavin. This is 6,7-dimethyl-8-ribityllumazine synthase from Stutzerimonas stutzeri (strain A1501) (Pseudomonas stutzeri).